The primary structure comprises 446 residues: MFYLDTHNILYLGSCLLASVCTLCICRNRELFPHISENKPIGQLYRLMNIHKYESFSIIIQIHHLNLKFGDDDNAKFIVHLKIGNRYAYTHYHKQYQNKVHIEERKNMVVKQNNNTLRLEVYKKGTLKNTFFGSAEIHIYSEIVKKLFPCNVYFNITNKNQIVGTACLSFHYINLDCIKKDDQIYTSLFIETIISVQKNQTKNNEKIEKLIDEGKEHFEAIKETDLSTTIYKNISNLVLEDKIRLFCKNLNGYLLHSNFYIKRFYNKYYFYLHFFKGKFYWCYYNEEADAKMDKNRVGYVRLEYVANVYSDVYSHKYFYIKYRKKNERKENYLYLKTIDKDRNIWVNIIHDFIILVSNYKRERKNKKYKIKEFKDNLIEDTPKEILEINKTLSRSLSNNSMKNKYLDKKKKVEVLSDMDNEENYMNSGDLGPVFKDMSKNMYNYSD.

One can recognise a C2 domain in the interval 39 to 208 (KPIGQLYRLM…NQTKNNEKIE (170 aa)). Residues 252–363 (GYLLHSNFYI…ILVSNYKRER (112 aa)) form the PH domain.

It localises to the cytoplasmic vesicle. The protein localises to the secretory vesicle. Its subcellular location is the rhoptry membrane. In terms of biological role, essential for merozoite invasion of host cells by controlling rhoptry secretion. Binds to phosphatidic acid (PA) and phosphatidylinositol 4,5-bisphosphate (PIP2) lipids and thus, likely contributes to the assembly of the machinery that docks or primes the rhoptry to the parasite cell membrane prior to the fusion with the host cell membrane. The protein is Rhoptry surface protein CERLI1 of Plasmodium falciparum (isolate 3D7).